The chain runs to 297 residues: Transcriptional regulator protein Pur-beta (297 aa).

2 disordered regions span residues 1 to 26 and 275 to 297; these read MADG…EQET and QERH…VDDD. N-acetylalanine is present on A2. The segment at 23–246 is DNA-binding; that stretch reads EQETQELASK…LRVSEVKPSY (224 aa). The segment covering 275 to 288 has biased composition (basic and acidic residues); sequence QERHRDKMYERREE.

Belongs to the PUR DNA-binding protein family.

The protein resides in the nucleus. Its function is as follows. Transcriptional regulator which can act as an activator or a repressor. The polypeptide is Transcriptional regulator protein Pur-beta (purb) (Danio rerio (Zebrafish)).